A 129-amino-acid chain; its full sequence is Large ribosomal subunit protein uL22 (129 aa).

It belongs to the universal ribosomal protein uL22 family. Part of the 50S ribosomal subunit.

Its function is as follows. This protein binds specifically to 23S rRNA; its binding is stimulated by other ribosomal proteins, e.g. L4, L17, and L20. It is important during the early stages of 50S assembly. It makes multiple contacts with different domains of the 23S rRNA in the assembled 50S subunit and ribosome. Functionally, the globular domain of the protein is located near the polypeptide exit tunnel on the outside of the subunit, while an extended beta-hairpin is found that lines the wall of the exit tunnel in the center of the 70S ribosome. The sequence is that of Large ribosomal subunit protein uL22 from Aster yellows witches'-broom phytoplasma (strain AYWB).